The chain runs to 62 residues: Large ribosomal subunit protein eL37 (62 aa).

Zn(2+)-binding residues include C20, C23, C35, and C38. The segment at 20–38 adopts a C4-type zinc-finger fold; the sequence is CRRCGRVSYNVKKGYCAAC.

This sequence belongs to the eukaryotic ribosomal protein eL37 family. Part of the 50S ribosomal subunit. Zn(2+) is required as a cofactor.

Functionally, binds to the 23S rRNA. This chain is Large ribosomal subunit protein eL37, found in Pyrococcus furiosus (strain ATCC 43587 / DSM 3638 / JCM 8422 / Vc1).